The following is a 296-amino-acid chain: Light-independent protochlorophyllide reductase iron-sulfur ATP-binding protein (296 aa).

Residues 39-44 (GIGKST) and lysine 68 each bind ATP. Serine 43 provides a ligand contact to Mg(2+). Positions 124 and 158 each coordinate [4Fe-4S] cluster. 209–210 (NR) is an ATP binding site.

It belongs to the NifH/BchL/ChlL family. In terms of assembly, homodimer. Protochlorophyllide reductase is composed of three subunits; ChlL, ChlN and ChlB. [4Fe-4S] cluster is required as a cofactor.

It carries out the reaction chlorophyllide a + oxidized 2[4Fe-4S]-[ferredoxin] + 2 ADP + 2 phosphate = protochlorophyllide a + reduced 2[4Fe-4S]-[ferredoxin] + 2 ATP + 2 H2O. The protein operates within porphyrin-containing compound metabolism; chlorophyll biosynthesis (light-independent). Its function is as follows. Component of the dark-operative protochlorophyllide reductase (DPOR) that uses Mg-ATP and reduced ferredoxin to reduce ring D of protochlorophyllide (Pchlide) to form chlorophyllide a (Chlide). This reaction is light-independent. The L component serves as a unique electron donor to the NB-component of the complex, and binds Mg-ATP. This chain is Light-independent protochlorophyllide reductase iron-sulfur ATP-binding protein, found in Prochlorococcus marinus (strain MIT 9303).